Reading from the N-terminus, the 294-residue chain is Small ribosomal subunit protein uS2 (294 aa).

Basic and acidic residues predominate over residues 256-274 (SGKFIMDEDPDSKKTKTAE). The disordered stretch occupies residues 256 to 294 (SGKFIMDEDPDSKKTKTAEEPSATIEPSTTTTVEVDQNE). A compositionally biased stretch (polar residues) spans 280–294 (IEPSTTTTVEVDQNE).

Belongs to the universal ribosomal protein uS2 family.

This is Small ribosomal subunit protein uS2 from Leptospira interrogans serogroup Icterohaemorrhagiae serovar Lai (strain 56601).